The following is a 353-amino-acid chain: MCGRTSCHLPRDALTRACAYLDRQGRRQLPQWRDPDKYCPSYNKSPQSSSPVLLSRLHFEKDADSSDRIIFPMRWGLVPSWFKESDPSKLQFNTSNCRSDTIMEKQSFKAPLGKGRRCVVLADGFYEWQRCQGTNQRQPYFIYFPQSKTEKSGENSGSDSLNNKEEVWDNWRLLTMAGIFDCWEPPKGERLYSYSIITVDSCRGLSDIHSRMPAILDGEEAVSKWLDFGEVSTQEALKLIHPIDNITFHPVSPVVNNSRNNTPECLAPADLLVKKEPKASGSSQRMMQWLATKSPKKEVPDSPKKDASGLPQWSSQFLQKSPLPTKRGASSSLLDRWLKQEKEDEPVAKRPNS.

Cys-2 (nucleophile) is an active-site residue. The residue at position 2 (Cys-2) is a Thiazolidine linkage to a ring-opened DNA abasic site. Residue Glu-127 is part of the active site. Residues Lys-148 and Lys-151 each participate in a glycyl lysine isopeptide (Lys-Gly) (interchain with G-Cter in SUMO2) cross-link. Ser-160 bears the Phosphoserine mark. Glycyl lysine isopeptide (Lys-Gly) (interchain with G-Cter in SUMO2) cross-links involve residues Lys-274 and Lys-275. A disordered region spans residues 292–353; the sequence is TKSPKKEVPD…DEPVAKRPNS (62 aa). The residue at position 294 (Ser-294) is a Phosphoserine. The segment covering 295–307 has biased composition (basic and acidic residues); the sequence is PKKEVPDSPKKDA. A Glycyl lysine isopeptide (Lys-Gly) (interchain with G-Cter in SUMO2) cross-link involves residue Lys-305. Phosphoserine is present on Ser-321. The PIP-box signature appears at 332 to 338; that stretch reads SLLDRWL. Basic and acidic residues predominate over residues 336-353; sequence RWLKQEKEDEPVAKRPNS. Glycyl lysine isopeptide (Lys-Gly) (interchain with G-Cter in SUMO2) cross-links involve residues Lys-339 and Lys-342.

The protein belongs to the SOS response-associated peptidase family. As to quaternary structure, interacts (via PIP-box motif) with PCNA. In terms of processing, ubiquitinated; the covalent HMCES DNA-protein cross-link is ubiquitinated, leading to its degradation by the proteasome.

The protein resides in the chromosome. Formation and reversal of DNA-protein cross-link depends on DNA context. Catalyzes formation of the thiazolidine linkage in presence of abasic sites in single-stranded DNA. Mediates the reversal of the thiazolidine cross-link in presence of double stranded DNA. Sensor of abasic sites in single-stranded DNA (ssDNA) required to preserve genome integrity by promoting error-free repair of abasic sites. Acts as an enzyme that recognizes and binds abasic sites in ssDNA at replication forks and chemically modifies the lesion by forming a covalent cross-link with DNA: forms a stable thiazolidine linkage between a ring-opened abasic site and the alpha-amino and sulfhydryl substituents of its N-terminal catalytic cysteine residue. Promotes error-free repair by protecting abasic sites from translesion synthesis (TLS) polymerases and endonucleases that are error-prone and would generate mutations and double-strand breaks. The HMCES DNA-protein cross-link is then either reversed or degraded. HMCES is able to catalyze the reversal of its thiazolidine cross-link and cycle between a cross-link and a non-cross-linked state depending on DNA context: mediates self-reversal of the thiazolidine cross-link in double stranded DNA, allowing APEX1 to initiate downstream repair of abasic sites. The HMCES DNA-protein cross-link can also be degraded by the SPRTN metalloprotease following unfolding by the BRIP1/FANCJ helicase. Has preference for ssDNA, but can also accommodate double-stranded DNA with 3' or 5' overhang (dsDNA), and dsDNA-ssDNA 3' junction. Plays a protective role during somatic hypermutation of immunoglobulin genes in B-cells: acts via its ability to form covalent cross-links with abasic sites, thereby limiting the accumulation of deletions in somatic hypermutation target regions. Also involved in class switch recombination (CSR) in B-cells independently of the formation of a DNA-protein cross-link: acts by binding and protecting ssDNA overhangs to promote DNA double-strand break repair through the microhomology-mediated alternative-end-joining (Alt-EJ) pathway. Acts as a protease: mediates autocatalytic processing of its N-terminal methionine in order to expose the catalytic cysteine. This is Abasic site processing protein HMCES from Rattus norvegicus (Rat).